Consider the following 255-residue polypeptide: MLKVAALYQFAPLPDFREVREPLRALCVGLSVKGTILLAGEGINGTVAGMPDAIDALAAELQTGTLFSGRLDNLELKFSQASVMPFARLKVRLKKEIVTLGDPATDPTRAVGIYVEPKDWNGLIAAPDTLLIDTRNAFEVAMGTFEGAVDPQLARFGEFKDFVAQKLDPDRHRRIAMFCTGGIRCEKASSYLLSRGFKEVYHLKGGILKYLEGIPESESCWRGECFVFDDRIALGHGLTESRRAGRLMDGAPGDD.

Residues 125–219 (AAPDTLLIDT…YLEGIPESES (95 aa)) enclose the Rhodanese domain. The active-site Cysteine persulfide intermediate is the Cys-179.

It belongs to the TrhO family.

The catalysed reaction is uridine(34) in tRNA + AH2 + O2 = 5-hydroxyuridine(34) in tRNA + A + H2O. Functionally, catalyzes oxygen-dependent 5-hydroxyuridine (ho5U) modification at position 34 in tRNAs. In Nitrobacter hamburgensis (strain DSM 10229 / NCIMB 13809 / X14), this protein is tRNA uridine(34) hydroxylase.